Consider the following 329-residue polypeptide: BTB/POZ domain-containing adapter for CUL3-mediated RhoA degradation protein 1 (329 aa).

The disordered stretch occupies residues 1 to 31 (MSAEASGPAPAAAECLESPSPSSVEPGSPSY). Positions 41 to 109 (KYVKLNVGGS…LRDGSVPLPE (69 aa)) constitute a BTB domain.

Belongs to the BACURD family. Homotetramer; forms a two-fold symmetric tetramer in solution. Interacts with CUL3; interaction is direct and forms a 5:5 heterodecamer. Component of the BCR(KCTD13) E3 ubiquitin ligase complex, at least composed of CUL3, KCTD13/BACURD1 and RBX1. Interacts with RHOA; with a preference for RhoA-GDP. Interacts with POLD2 and PCNA. Interacts with SPRTN.

The protein localises to the nucleus. It functions in the pathway protein modification; protein ubiquitination. Functionally, substrate-specific adapter of a BCR (BTB-CUL3-RBX1) E3 ubiquitin-protein ligase complex required for synaptic transmission. The BCR(KCTD13) E3 ubiquitin ligase complex mediates the ubiquitination of RHOA, leading to its degradation by the proteasome, thereby regulating the actin cytoskeleton and promoting synaptic transmission. This chain is BTB/POZ domain-containing adapter for CUL3-mediated RhoA degradation protein 1 (Kctd13), found in Mus musculus (Mouse).